The sequence spans 359 residues: DNA replication and repair protein RecF (359 aa).

ATP is bound at residue 30–37 (GQNAQGKT).

This sequence belongs to the RecF family.

The protein resides in the cytoplasm. Its function is as follows. The RecF protein is involved in DNA metabolism; it is required for DNA replication and normal SOS inducibility. RecF binds preferentially to single-stranded, linear DNA. It also seems to bind ATP. The protein is DNA replication and repair protein RecF of Lactococcus lactis subsp. cremoris (strain MG1363).